The chain runs to 196 residues: Orotate phosphoribosyltransferase (196 aa).

5-phospho-alpha-D-ribose 1-diphosphate is bound at residue 117–125; that stretch reads EDIVTTGLS. Orotate contacts are provided by T121 and R149.

Belongs to the purine/pyrimidine phosphoribosyltransferase family. PyrE subfamily. As to quaternary structure, homodimer. Mg(2+) is required as a cofactor.

It catalyses the reaction orotidine 5'-phosphate + diphosphate = orotate + 5-phospho-alpha-D-ribose 1-diphosphate. The protein operates within pyrimidine metabolism; UMP biosynthesis via de novo pathway; UMP from orotate: step 1/2. Functionally, catalyzes the transfer of a ribosyl phosphate group from 5-phosphoribose 1-diphosphate to orotate, leading to the formation of orotidine monophosphate (OMP). This is Orotate phosphoribosyltransferase from Methylorubrum populi (strain ATCC BAA-705 / NCIMB 13946 / BJ001) (Methylobacterium populi).